Reading from the N-terminus, the 424-residue chain is Methylenetetrahydrofolate--tRNA-(uracil-5-)-methyltransferase TrmFO 1 (424 aa).

Residue 8–13 (GAGLSG) coordinates FAD.

It belongs to the MnmG family. TrmFO subfamily. It depends on FAD as a cofactor.

Its subcellular location is the cytoplasm. It catalyses the reaction uridine(54) in tRNA + (6R)-5,10-methylene-5,6,7,8-tetrahydrofolate + NADH + H(+) = 5-methyluridine(54) in tRNA + (6S)-5,6,7,8-tetrahydrofolate + NAD(+). It carries out the reaction uridine(54) in tRNA + (6R)-5,10-methylene-5,6,7,8-tetrahydrofolate + NADPH + H(+) = 5-methyluridine(54) in tRNA + (6S)-5,6,7,8-tetrahydrofolate + NADP(+). Catalyzes the folate-dependent formation of 5-methyl-uridine at position 54 (M-5-U54) in all tRNAs. The chain is Methylenetetrahydrofolate--tRNA-(uracil-5-)-methyltransferase TrmFO 1 from Mycoplasma mycoides subsp. mycoides SC (strain CCUG 32753 / NCTC 10114 / PG1).